A 214-amino-acid polypeptide reads, in one-letter code: rRNA methyltransferase 2, mitochondrial (214 aa).

A mitochondrion-targeting transit peptide spans 1 to 18 (MFSTKKSQGNLHKYIQRQ). S-adenosyl-L-methionine-binding positions include 63–66 (PGSW), aspartate 83, 100–101 (DI), and aspartate 125. Lysine 169 functions as the Proton acceptor in the catalytic mechanism.

It belongs to the class I-like SAM-binding methyltransferase superfamily. RNA methyltransferase RlmE family.

Its subcellular location is the mitochondrion. It carries out the reaction a uridine in rRNA + S-adenosyl-L-methionine = a 2'-O-methyluridine in rRNA + S-adenosyl-L-homocysteine + H(+). In terms of biological role, S-adenosyl-L-methionine-dependent 2'-O-ribose methyltransferase that catalyzes the formation of 2'-O-methyluridine at position 808 (Um808) in the mitochondrial large subunit ribosomal RNA (mtLSU rRNA), a universally conserved modification in the peptidyl transferase domain of the mtLSU rRNA. This activity may require prior 2'-O-methylguanosine modification at position 809 (Gm809) by MRM3. Essential for late-stage assembly of mtLSU required for efficient translation of mitochondrial DNA encoded proteins; methyltransferase activity is not required for this function. Essential for mitochondrial respiratory function. The chain is rRNA methyltransferase 2, mitochondrial from Caenorhabditis elegans.